A 527-amino-acid chain; its full sequence is Probable protein kinase UbiB (527 aa).

The Protein kinase domain maps to 118–501 (DFERVPVASA…QKRTNRLLQG (384 aa)). ATP is bound by residues 124-132 (VASASIAQV) and lysine 150. Aspartate 285 (proton acceptor) is an active-site residue. A helical membrane pass occupies residues 502–522 (LLMFGVAVGVGAVLARAWLAI).

It belongs to the ABC1 family. UbiB subfamily.

The protein localises to the cell inner membrane. The protein operates within cofactor biosynthesis; ubiquinone biosynthesis [regulation]. In terms of biological role, is probably a protein kinase regulator of UbiI activity which is involved in aerobic coenzyme Q (ubiquinone) biosynthesis. The sequence is that of Probable protein kinase UbiB from Paraburkholderia phymatum (strain DSM 17167 / CIP 108236 / LMG 21445 / STM815) (Burkholderia phymatum).